A 320-amino-acid chain; its full sequence is Probable cell division protein WhiA (320 aa).

The segment at residues Thr282 to Glu315 is a DNA-binding region (H-T-H motif).

The protein belongs to the WhiA family.

Involved in cell division and chromosome segregation. The polypeptide is Probable cell division protein WhiA (Alkaliphilus oremlandii (strain OhILAs) (Clostridium oremlandii (strain OhILAs))).